A 443-amino-acid polypeptide reads, in one-letter code: tRNA modification GTPase MnmE (443 aa).

(6S)-5-formyl-5,6,7,8-tetrahydrofolate contacts are provided by Arg23, Glu82, and Lys121. Residues 215 to 364 (GTSIVLAGHP…LKQFIQKWMQ (150 aa)) form the TrmE-type G domain. Asn225 provides a ligand contact to K(+). GTP is bound by residues 225–230 (NVGKSS), 244–250 (TDIPGTT), and 269–272 (DSAG). Ser229 serves as a coordination point for Mg(2+). K(+) contacts are provided by Thr244, Ile246, and Thr249. Thr250 lines the Mg(2+) pocket. Lys443 lines the (6S)-5-formyl-5,6,7,8-tetrahydrofolate pocket.

Belongs to the TRAFAC class TrmE-Era-EngA-EngB-Septin-like GTPase superfamily. TrmE GTPase family. In terms of assembly, homodimer. Heterotetramer of two MnmE and two MnmG subunits. K(+) is required as a cofactor.

The protein localises to the cytoplasm. In terms of biological role, exhibits a very high intrinsic GTPase hydrolysis rate. Involved in the addition of a carboxymethylaminomethyl (cmnm) group at the wobble position (U34) of certain tRNAs, forming tRNA-cmnm(5)s(2)U34. The sequence is that of tRNA modification GTPase MnmE from Chlamydia caviae (strain ATCC VR-813 / DSM 19441 / 03DC25 / GPIC) (Chlamydophila caviae).